Reading from the N-terminus, the 305-residue chain is Homoserine O-acetyltransferase (305 aa).

Catalysis depends on C132, which acts as the Acyl-thioester intermediate. Positions 153 and 181 each coordinate substrate. The active-site Proton acceptor is H221. The active site involves E223. R235 contacts substrate.

It belongs to the MetA family.

The protein localises to the cytoplasm. The catalysed reaction is L-homoserine + acetyl-CoA = O-acetyl-L-homoserine + CoA. It functions in the pathway amino-acid biosynthesis; L-methionine biosynthesis via de novo pathway; O-acetyl-L-homoserine from L-homoserine: step 1/1. Functionally, transfers an acetyl group from acetyl-CoA to L-homoserine, forming acetyl-L-homoserine. In Leuconostoc mesenteroides subsp. mesenteroides (strain ATCC 8293 / DSM 20343 / BCRC 11652 / CCM 1803 / JCM 6124 / NCDO 523 / NBRC 100496 / NCIMB 8023 / NCTC 12954 / NRRL B-1118 / 37Y), this protein is Homoserine O-acetyltransferase.